Consider the following 718-residue polypeptide: Cyclic-di-AMP phosphodiesterase PgpH (718 aa).

The Cytoplasmic segment spans residues 1–17 (MKLAKKWRDWYIESGKK). Residues 18-38 (YLFPLLLVCFAVIAYFLVCQM) form a helical membrane-spanning segment. The Extracellular portion of the chain corresponds to 39–289 (TKPESYNVKL…MLHLLDQKMP (251 aa)). The segment covering 112–127 (QEKDTKNKEKAKKENK) has biased composition (basic and acidic residues). Residues 112–140 (QEKDTKNKEKAKKENKPAPAPTSTEDKLK) are disordered. The chain crosses the membrane as a helical span at residues 290 to 310 (VKQYAGFAIFIIALAAILFLY). Over 311-324 (TKKQTQPKAKKMQT) the chain is Cytoplasmic. The chain crosses the membrane as a helical span at residues 325-345 (MLIFSSVYLVSLFMLFIILFL). Topologically, residues 346-349 (ETQN) are extracellular. Transmembrane regions (helical) follow at residues 350 to 370 (IANIAFLFPAAFAPMILKILL) and 371 to 391 (NEKYAFLSVIFIAVTSLLTFQ). Position 392 (asparagine 392) is a topological domain, extracellular. The helical transmembrane segment at 393 to 413 (DATSGITIFILLSGATSVVML) threads the bilayer. The Cytoplasmic segment spans residues 414–421 (RDYSRRSA). Residues 422 to 442 (IMLSGFMVGLINMIYVLLLLL) traverse the membrane as a helical segment. Topologically, residues 443–457 (INNSTLLQVSTLMAL) are extracellular. A helical membrane pass occupies residues 458-478 (GYAFLGGFGAFILGVGVIPLF). Topologically, residues 479–718 (ETIFGLLTTS…QRIQYPDDKD (240 aa)) are cytoplasmic. The region spanning 511 to 653 (TYHHSMMVAN…INISDSVEAA (143 aa)) is the HD domain. Mn(2+) contacts are provided by histidine 514, histidine 543, and aspartate 544. Residue histidine 514 coordinates substrate. Substrate contacts are provided by residues 544 to 547 (DIGK) and 555 to 556 (VE). The Mn(2+) site is built by histidine 580, histidine 604, and histidine 605. Substrate contacts are provided by tyrosine 631 and aspartate 648. Aspartate 648 serves as a coordination point for Mn(2+).

Belongs to the PgpH phosphodiesterase family. The cofactor is Mn(2+).

It is found in the cell membrane. It carries out the reaction 3',3'-c-di-AMP + H2O = 5'-O-phosphonoadenylyl-(3'-&gt;5')-adenosine + H(+). C-di-AMP hydrolysis inhibited by ppGpp, without altering c-di-AMP binding. In terms of biological role, a phosphodiesterase (PDE) that hydrolyzes cyclic di-3',5'-adenylate (c-di-AMP); there are at least 2 PDEs for c-di-AMP in this bacteria (this and pdeA), this may be the major PDE for growth in liquid culture. During host infection c-di-AMP is secreted into the host cytoplasm which leads to interferon-beta production and secretion by the host. The cytoplasmic HD domain binds and hydrolyzes c-di-AMP to 5'-pApA; has very low activity against c-di-GMP, does not hydrolyze ppGpp. The sequence is that of Cyclic-di-AMP phosphodiesterase PgpH from Listeria monocytogenes serotype 1/2a (strain 10403S).